The primary structure comprises 98 residues: NADH-ubiquinone oxidoreductase chain 4L (98 aa).

A run of 3 helical transmembrane segments spans residues 2-22, 29-49, and 61-81; these read PSIF…TLVF, SLLC…LIIL, and ILLL…LVMV.

This sequence belongs to the complex I subunit 4L family. In terms of assembly, core subunit of respiratory chain NADH dehydrogenase (Complex I) which is composed of 45 different subunits.

Its subcellular location is the mitochondrion inner membrane. The catalysed reaction is a ubiquinone + NADH + 5 H(+)(in) = a ubiquinol + NAD(+) + 4 H(+)(out). Core subunit of the mitochondrial membrane respiratory chain NADH dehydrogenase (Complex I) which catalyzes electron transfer from NADH through the respiratory chain, using ubiquinone as an electron acceptor. Part of the enzyme membrane arm which is embedded in the lipid bilayer and involved in proton translocation. In Avahi laniger (Eastern woolly lemur), this protein is NADH-ubiquinone oxidoreductase chain 4L (MT-ND4L).